We begin with the raw amino-acid sequence, 623 residues long: Vacuolar-sorting receptor 1 (623 aa).

The first 22 residues, 1 to 22 (MKCWRLSAILFLGFMLTSLSTA), serve as a signal peptide directing secretion. At 23-564 (RFVVEKNSLS…SKTASQAKST (542 aa)) the chain is on the lumenal side. The PA domain occupies 54-163 (QYGGSMAGNV…SFGEKLKDAI (110 aa)). A glycan (N-linked (GlcNAc...) asparagine) is linked at Asn143. EGF-like domains follow at residues 411–461 (ETNE…TTCE) and 464–511 (GHGR…KNCE). Cystine bridges form between Cys415/Cys433, Cys422/Cys442, Cys444/Cys460, Cys468/Cys488, Cys475/Cys496, and Cys498/Cys510. In terms of domain architecture, EGF-like 3; calcium-binding spans 512 to 554 (DIDECKDKKACQCPECSCKNTWGSYNCSCSGDLLYIKDQDTCI). N-linked (GlcNAc...) asparagine glycosylation occurs at Asn537. A disulfide bridge connects residues Cys540 and Cys553. The chain crosses the membrane as a helical span at residues 565–585 (WAAFWVVLIALAMIAGGGFLV). Residues 586–623 (YKYRIRQYMDSEIRAIMAQYMPLDSQEEGPNHVNHQRG) are Cytoplasmic-facing. The short motif at 605–608 (YMPL) is the Tyrosine-based internalization motif element.

The protein belongs to the VSR (BP-80) family. As to quaternary structure, interacts with the N-terminal propeptide of aleurein (proaleurein).

Its subcellular location is the membrane. The protein resides in the golgi apparatus membrane. It localises to the cytoplasmic vesicle. The protein localises to the clathrin-coated vesicle membrane. It is found in the prevacuolar compartment membrane. Vacuolar-sorting receptor (VSR) involved in clathrin-coated vesicles sorting from Golgi apparatus to vacuoles. Seems to binds preferentially proteins containing a N-terminal NPIR motif. The sequence is that of Vacuolar-sorting receptor 1 (BP80) from Pisum sativum (Garden pea).